The following is a 119-amino-acid chain: Protein BEX4 (119 aa).

The segment at 1–53 (MESKEELAANNLNGENAQQENEGREQAPTQNEETRHLGGGEGQKPGGNIRRGR) is disordered. Positions 8 to 20 (AANNLNGENAQQE) are enriched in low complexity. The interaction with SIRT2 stretch occupies residues 31–89 (NEETRHLGGGEGQKPGGNIRRGRVRRLVPNFRWAIPNRHIEHNEARDDVERFVGQMMEI). An interaction with alpha-tubulin region spans residues 31–119 (NEETRHLGGG…DNHYDFCLIP (89 aa)). Cys116 provides a ligand contact to Zn(2+).

Belongs to the BEX family. In terms of assembly, interacts with alpha-tubulin. Interacts with SIRT2. In terms of processing, ubiquitinated and degraded by the proteasome.

The protein resides in the cytoplasm. It localises to the cytoskeleton. It is found in the spindle pole. The protein localises to the nucleus. Its function is as follows. May play a role in microtubule deacetylation by negatively regulating the SIRT2 deacetylase activity toward alpha-tubulin and thereby participate in the control of cell cycle progression and genomic stability. In absence of reductive stress, acts as a pseudosubstrate for the CRL2(FEM1B) complex: associates with FEM1B via zinc, thereby preventing association between FEM1B and its substrates. In Pongo abelii (Sumatran orangutan), this protein is Protein BEX4.